We begin with the raw amino-acid sequence, 545 residues long: SLAIN motif-containing protein 1 (545 aa).

Residues 14–53 adopt a coiled-coil conformation; that stretch reads TTNGLVANAELEVKKLQELVRKLEKQNEQLRNRASAVSNC. Composition is skewed to low complexity over residues 268 to 286 and 466 to 481; these read TTSTCSSVSRPRSSFSLYS and IPSSTSLQSLSSSGIP. 2 disordered regions span residues 268 to 342 and 461 to 526; these read TTST…IRDC and QGGS…LQPP. Residues 503-522 are compositionally biased toward polar residues; it reads STANGSSIPRSKIAQPQRSF.

This sequence belongs to the SLAIN motif-containing family.

Its subcellular location is the cytoplasm. It is found in the cytoskeleton. In terms of biological role, microtubule plus-end tracking protein that might be involved in the regulation of cytoplasmic microtubule dynamics, microtubule organization and microtubule elongation. This is SLAIN motif-containing protein 1 (slain1) from Xenopus tropicalis (Western clawed frog).